The primary structure comprises 342 residues: Dihydroorotate dehydrogenase (quinone) (342 aa).

FMN is bound by residues alanine 61 to lysine 65 and threonine 85. Residue lysine 65 participates in substrate binding. Asparagine 110 to phenylalanine 114 is a binding site for substrate. Residues asparagine 138 and asparagine 171 each contribute to the FMN site. A substrate-binding site is contributed by asparagine 171. The Nucleophile role is filled by serine 174. Asparagine 176 is a substrate binding site. FMN-binding residues include lysine 216 and threonine 244. Asparagine 245–threonine 246 is a binding site for substrate. FMN-binding positions include glycine 267, glycine 296, and tyrosine 317–serine 318.

Belongs to the dihydroorotate dehydrogenase family. Type 2 subfamily. Monomer. FMN serves as cofactor.

It is found in the cell membrane. It carries out the reaction (S)-dihydroorotate + a quinone = orotate + a quinol. It functions in the pathway pyrimidine metabolism; UMP biosynthesis via de novo pathway; orotate from (S)-dihydroorotate (quinone route): step 1/1. Functionally, catalyzes the conversion of dihydroorotate to orotate with quinone as electron acceptor. This Cellvibrio japonicus (strain Ueda107) (Pseudomonas fluorescens subsp. cellulosa) protein is Dihydroorotate dehydrogenase (quinone).